We begin with the raw amino-acid sequence, 975 residues long: 5'-3' exoribonuclease 2 homolog (975 aa).

Residues 262-279 (RACDLCGQYGHELKECRG) form a CCHC-type zinc finger. 2 disordered regions span residues 424-443 (MQMYGGGGRGGRGRGRGRGQ) and 505-532 (SPADIASRKRKAEQPLIKPEEEEDEGPK). Residues 534 to 787 (DIRLYESGWK…GICVLYEDPE (254 aa)) form an interaction with paxt-1 region. Positions 804 to 821 (EPEKTLKPDDWNDRRDGR) are enriched in basic and acidic residues. Residues 804–975 (EPEKTLKPDD…GGYHGNSSWR (172 aa)) form a disordered region. 3 stretches are compositionally biased toward gly residues: residues 850–860 (RGGGGGGGGYR), 886–895 (NYGGRDGGGP), and 908–932 (GYQGGGYGGGYGGGGGGGGGGGGGS).

This sequence belongs to the 5'-3' exonuclease family. XRN2/RAT1 subfamily. In terms of assembly, interacts with paxt-1 (via N-terminus); the interaction is direct and results in stabilization of xrn-2 in the complex. As to expression, expressed in the pharyngeal myoepithelium and intestine. Also expressed in several anterior neurons including the sensory neurons, as well as the interneuron PVT and the pharyngeal motorneuron M5.

It localises to the nucleus. Possesses 5'-&gt;3' exoribonuclease activity. Plays a role in maintenance of steady-state concentration and turnover of microRNAs (miRNA) by degradation of mature miRNA. Degradation role is enhanced when in complex with paxt-1. Partially redundant to xrn-1 in miRNA guide strand degradation. Implicated in differential regulation of mRNAs such as let-7 by controlling the accumulation of mature miRNA. Positively regulates molting of the pharyngeal cuticle. The protein is 5'-3' exoribonuclease 2 homolog of Caenorhabditis elegans.